A 356-amino-acid polypeptide reads, in one-letter code: Protein pelota homolog (356 aa).

The protein belongs to the eukaryotic release factor 1 family. Pelota subfamily. In terms of assembly, monomer. Requires a divalent metal cation as cofactor.

Its subcellular location is the cytoplasm. Its function is as follows. May function in recognizing stalled ribosomes, interact with stem-loop structures in stalled mRNA molecules, and effect endonucleolytic cleavage of the mRNA. May play a role in the release non-functional ribosomes and degradation of damaged mRNAs. Has endoribonuclease activity. The polypeptide is Protein pelota homolog (Desulfurococcus amylolyticus (strain DSM 18924 / JCM 16383 / VKM B-2413 / 1221n) (Desulfurococcus kamchatkensis)).